A 643-amino-acid chain; its full sequence is MEGRTTAGRATPAGFWLFSCCLASVLWSANALIPAGKSAGSSFLAATSSQSSEEAPREFPGHLSNSQIASETGSALKIEEIASSGSAPEVSGAAGASASKTSEKPIRPYHTGPSSRSSAYSASSGIPLCHTCSSFDAANGGCRLCVHGEVASDFLMPMMPIRNIDTHREETLSRLEANHRTHLNEKKNFYVLRGKGPFGSLGNLPGTPGLDAAIAFGLSSPDLPSASFAQIKNKDSSDSGDVAAVGEETDSAVADGSKTLDLDLKLAETSVPILQMKDSQYVGVIGIGTPPQFVQPIFDTGSTNLWVVGSKCTDDTCTKVTRFDPSASKTFRAANPPVHLDITFGTGRIEGSTGIDDFTVGPFLVKGQSFGLVESEGGHNMHGNIFKTINFEGIVGLAFPEMSSTGTVPIYDNIISQGTLKENEFAFYMAKGSQVSALFFGGVDPRFYEAPIHMFPVTREHYWETSLDAIYIGDKKFCCEEGTKNYVILDSGTSFNTMPSGELGKLLDMIPSKECNLDDPEFTSDFPTITYVIGGVKFPLTPEQYLVRSKKNECKPAYMQIDVPSQFGHAYILGSVAFMRHYYTVFRRSDGTRPSLVGIARAVHNDDNSAYLSNVLNEYPGAHIRKEDLMMERSMSAPSMREL.

Positions M1 to A31 are cleaved as a signal peptide. A compositionally biased stretch (low complexity) spans A87–S99. The tract at residues A87 to R116 is disordered. Residues Y281 to A600 form the Peptidase A1 domain. Catalysis depends on residues D299 and D490.

The protein belongs to the peptidase A1 family.

The protein resides in the endomembrane system. With respect to regulation, inhibited by 49c, a hydroxyethylamine scaffold-based compound. Its function is as follows. Required for the processing-mediated maturation of a subset of microneme proteins, such as MIC6, and rhoptry proteins, such as ROP1. By regulating microneme and rhoptry processing, plays an essential role in the lysis of the host cell membrane during egress and in rhoptry content discharge, which is required for invasion of host cells. In Toxoplasma gondii, this protein is Aspartic protease 3.